The sequence spans 147 residues: Small ribosomal subunit protein uS12 (147 aa).

It belongs to the universal ribosomal protein uS12 family. In terms of assembly, part of the 30S ribosomal subunit.

With S4 and S5 plays an important role in translational accuracy. Located at the interface of the 30S and 50S subunits. This chain is Small ribosomal subunit protein uS12, found in Methanococcus maripaludis (strain C5 / ATCC BAA-1333).